A 191-amino-acid polypeptide reads, in one-letter code: Probable rho GDP-dissociation inhibitor (191 aa).

Positions 1–22 (MSDHENTGENTSEYQYKQPPQK) are disordered. The segment covering 8–21 (GENTSEYQYKQPPQ) has biased composition (polar residues).

It belongs to the Rho GDI family.

The protein resides in the cytoplasm. In terms of biological role, regulates the GDP/GTP exchange reaction of the Rho proteins by inhibiting the dissociation of GDP from them, and the subsequent binding of GTP to them. The protein is Probable rho GDP-dissociation inhibitor (rhi-1) of Caenorhabditis elegans.